The chain runs to 487 residues: MKAQPKASHFIGGAFVEDKAGKPLPVIYPATGEEIASLYSATPGIIEAAYAAALKAQGEWAALKPVERGRILRRTAEILREKNRKLSKLETLDTGKALQETLVADAASAADALEFFGGIISGFNGEFVELGGSFAYTRREALGICVGIGAWNYPIQIAAWKSAPALAMGNAFIFKPSENTPLSALALAEAYKEAGLPDGLFNVVQGYGDVGAALVNHRLTAKVSLTGSVPTGRRIMAQAGEQLKHVTMELGGKSPLIVFDDADLESAIGGAMLGNFYSTGQVCSNGTRVFVHKNIRERFIERLVERTRKIRIGDPFDEATQMGPLISAAQRDKVLSYIKKGKAEGATLACGGGVPKLQGFDKGFFIEPTVFADVTDTMTIAREEIFGPVMSVLEFSDEDEVIARANDSEFGLAAGVFTADLSRGHHVIGQIKAGTCWINAYNLTSVEVPFGGYKQSGIGRENGIAALAHYSQIKTVYVEMGKVDSPY.

K(+)-binding residues include I27 and D93. 149 to 151 (GAW) provides a ligand contact to NAD(+). Residue K161 is the Charge relay system of the active site. NAD(+) is bound by residues 175–178 (KPSE) and 228–231 (SVPT). K(+) is bound at residue L243. E249 functions as the Proton acceptor in the catalytic mechanism. Residues G251, C283, and E384 each coordinate NAD(+). Residue C283 is the Nucleophile of the active site. C283 bears the Cysteine sulfenic acid (-SOH) mark. K(+) is bound by residues K454 and G457. The active-site Charge relay system is the E461.

Belongs to the aldehyde dehydrogenase family. In terms of assembly, dimer of dimers. K(+) serves as cofactor.

It catalyses the reaction betaine aldehyde + NAD(+) + H2O = glycine betaine + NADH + 2 H(+). Its pathway is amine and polyamine biosynthesis; betaine biosynthesis via choline pathway; betaine from betaine aldehyde: step 1/1. In terms of biological role, involved in the biosynthesis of the osmoprotectant glycine betaine. Catalyzes the irreversible oxidation of betaine aldehyde to the corresponding acid. This chain is Betaine aldehyde dehydrogenase, found in Brucella melitensis biotype 2 (strain ATCC 23457).